A 329-amino-acid chain; its full sequence is uncharacterized protein (329 aa).

2 consecutive transmembrane segments (helical) span residues 13 to 35 (IPVLIISLITLVASAYALYWATI) and 229 to 248 (VIPAALCTVSIIFAGLSVVY).

It localises to the cell membrane. This is an uncharacterized protein from Archaeoglobus fulgidus (strain ATCC 49558 / DSM 4304 / JCM 9628 / NBRC 100126 / VC-16).